Reading from the N-terminus, the 271-residue chain is Short chain dehydrogenase asqE (271 aa).

I22, D70, and N99 together coordinate NADP(+). Catalysis depends on proton donor residues S152 and S153. 3 residues coordinate NADP(+): Y167, K171, and T203. Y167 (proton acceptor) is an active-site residue. The Lowers pKa of active site Tyr role is filled by K171.

Belongs to the short-chain dehydrogenases/reductases (SDR) family.

The enzyme catalyses a primary alcohol + NAD(+) = an aldehyde + NADH + H(+). It catalyses the reaction a secondary alcohol + NAD(+) = a ketone + NADH + H(+). It functions in the pathway secondary metabolite biosynthesis. The protein operates within alkaloid biosynthesis. It participates in mycotoxin biosynthesis. Short chain dehydrogenase; part of the gene cluster that mediates the biosynthesis of the aspoquinolone mycotoxins. The role of asqE within the aspoquinolone pathway has still to be determined. The first step of the pathway is catalyzed by the nonribosomal peptide synthetase asqK that condenses anthranilic acid and O-methyl-L-tyrosine to produce 4'-methoxycyclopeptin. 4'-methoxycyclopeptin is then converted to 4'-methoxydehydrocyclopeptin by the ketoglutarate-dependent dioxygenase asqJ. AsqJ also converts its first product 4'-methoxydehydrocyclopeptin to 4'-methoxycyclopenin. The following conversion of 4'-methoxycyclopenin into 4'-methoxyviridicatin is catalyzed by the cyclopenase asqI. 4'-methoxyviridicatin is the precursor of quinolone natural products, and is further converted to quinolinone B. The prenyltransferase asqH1 then catalyzes the canonical Friedel-Crafts alkylation of quinolinone B with dimethylallyl cation to yield dimethylallyl quinolone, which is subjected to FAD-dependent dehydrogenation by the FAD-linked oxidoreductase asqF to yield conjugated aryl diene. The delta(3') double bond then serves as the site of the second alkylation with DMAPP catalyzed by the prenyltransferase asqH2 to yield a carbenium ion intermediate, which can be attacked by H(2)O to yield a styrenyl quinolone containing a C3'-hydroxyprenyl chain. The FAD-dependent monooxygenase asqG performs epoxidation of the terminal C7'-C8' olefin. Finally, after dehydratation of the epoxide at C3 by asqC, the quinolone epoxide rearrangement protein asqO catalyzes an enzymatic 3-exo-tet cyclization to yield the cyclopropyl-THF ring system in aspoquinolone. This is Short chain dehydrogenase asqE from Emericella nidulans (strain FGSC A4 / ATCC 38163 / CBS 112.46 / NRRL 194 / M139) (Aspergillus nidulans).